The chain runs to 429 residues: Melanoma-associated antigen 11 (429 aa).

Disordered stretches follow at residues 1–30 (METQ…GDFG) and 188–215 (IFGS…IDPE). Residues 194–209 (DEGSGSQEKEGPSTSP) are compositionally biased toward polar residues. In terms of domain architecture, MAGE spans 222–421 (LHDKIIDLVH…TSYPSLYEDA (200 aa)).

In terms of tissue distribution, expressed in tumors of several types, such as melanoma, head and neck squamous cell carcinoma, lung carcinoma and breast carcinoma. Expressed in testis, ovary, prostate, cancerous prostate, breast and adrenal tissue.

It is found in the nucleus. It localises to the cytoplasm. Its function is as follows. Acts as androgen receptor coregulator that increases androgen receptor activity by modulating the receptors interdomain interaction. May play a role in embryonal development and tumor transformation or aspects of tumor progression. The protein is Melanoma-associated antigen 11 of Homo sapiens (Human).